The chain runs to 381 residues: Cytochrome b (381 aa).

The next 4 helical transmembrane spans lie at 32–52 (GGSL…LLAM), 76–98 (MILR…LHVL), 113–133 (VWIS…IGYV), and 179–199 (FYSF…FHIA). Residues histidine 82 and histidine 96 each contribute to the heme b site. Positions 183 and 197 each coordinate heme b. Histidine 202 is a binding site for a ubiquinone. Transmembrane regions (helical) follow at residues 225-245 (FGAK…ILVF), 289-309 (AMGV…PFIG), 318-338 (ITEW…WLGG), and 345-365 (TSFV…VCQP).

The protein belongs to the cytochrome b family. In terms of assembly, the main subunits of complex b-c1 are: cytochrome b, cytochrome c1 and the Rieske protein. Heme b serves as cofactor.

It is found in the mitochondrion inner membrane. In terms of biological role, component of the ubiquinol-cytochrome c reductase complex (complex III or cytochrome b-c1 complex) that is part of the mitochondrial respiratory chain. The b-c1 complex mediates electron transfer from ubiquinol to cytochrome c. Contributes to the generation of a proton gradient across the mitochondrial membrane that is then used for ATP synthesis. The chain is Cytochrome b (MT-CYB) from Chlamydomonas reinhardtii (Chlamydomonas smithii).